A 785-amino-acid chain; its full sequence is Conserved oligomeric Golgi complex subunit 4 (785 aa).

The tract at residues 1 to 24 (MADLDSPPKLSGVQQPSEGVGGGR) is disordered. A2 carries the post-translational modification N-acetylalanine. Residues 2 to 84 (ADLDSPPKLS…VTLHRMGPNL (83 aa)) are interaction with SCFD1. Position 6 is a phosphoserine (S6). The tract at residues 85–153 (QLIEGDAKQL…TALRSEDYEQ (69 aa)) is interaction with STX5. The segment at 618–740 (PQVQPWINSF…SQMATILNLE (123 aa)) is d domain. An e domain; essential for proper cell surface glycosylation region spans residues 741-785 (RVTEILDYWGPNSGPLTWRLTPAEVRQVLALRIDFRSEDIKRLRL).

It belongs to the COG4 family. As to quaternary structure, monomer. Component of the conserved oligomeric Golgi (COG) complex which is composed of eight different subunits and is required for normal Golgi morphology and localization. Mediates interaction of SCFD1 with the COG complex. Interacts with STX5.

It localises to the cytoplasm. It is found in the cytosol. The protein localises to the golgi apparatus membrane. Functionally, required for normal Golgi function. Plays a role in SNARE-pin assembly and Golgi-to-ER retrograde transport via its interaction with SCFD1. In Homo sapiens (Human), this protein is Conserved oligomeric Golgi complex subunit 4 (COG4).